The sequence spans 199 residues: UPF0301 protein Ajs_3573 (199 aa).

It belongs to the UPF0301 (AlgH) family.

The chain is UPF0301 protein Ajs_3573 from Acidovorax sp. (strain JS42).